The primary structure comprises 293 residues: 4-hydroxy-tetrahydrodipicolinate synthase (293 aa).

Thr46 serves as a coordination point for pyruvate. The active-site Proton donor/acceptor is the Tyr133. Lys161 functions as the Schiff-base intermediate with substrate in the catalytic mechanism. Residue Val202 participates in pyruvate binding.

Belongs to the DapA family. In terms of assembly, homotetramer; dimer of dimers.

It is found in the cytoplasm. The enzyme catalyses L-aspartate 4-semialdehyde + pyruvate = (2S,4S)-4-hydroxy-2,3,4,5-tetrahydrodipicolinate + H2O + H(+). Its pathway is amino-acid biosynthesis; L-lysine biosynthesis via DAP pathway; (S)-tetrahydrodipicolinate from L-aspartate: step 3/4. Functionally, catalyzes the condensation of (S)-aspartate-beta-semialdehyde [(S)-ASA] and pyruvate to 4-hydroxy-tetrahydrodipicolinate (HTPA). In Wolbachia pipientis wMel, this protein is 4-hydroxy-tetrahydrodipicolinate synthase.